The following is a 62-amino-acid chain: MDMKKLIERINFLYKKSKEEGLTEEEKIEQQKLRREYIDIIKGNVKVQLEGVEKIPTPNRRN.

Belongs to the UPF0291 family.

The protein resides in the cytoplasm. The protein is UPF0291 protein CLK_1994 of Clostridium botulinum (strain Loch Maree / Type A3).